The primary structure comprises 153 residues: 17.5 kDa class I heat shock protein (153 aa).

The region spanning 39-153 is the sHSP domain; that stretch reads ENSAFVNTRV…PDVKAIEISG (115 aa).

This sequence belongs to the small heat shock protein (HSP20) family. Forms oligomeric structures.

Its subcellular location is the cytoplasm. This is 17.5 kDa class I heat shock protein (HSP17.5-M) from Glycine max (Soybean).